The following is a 148-amino-acid chain: Holo-[acyl-carrier-protein] synthase (148 aa).

Residues Asp-9 and Glu-63 each coordinate Mg(2+).

Belongs to the P-Pant transferase superfamily. AcpS family. It depends on Mg(2+) as a cofactor.

It localises to the cytoplasm. The catalysed reaction is apo-[ACP] + CoA = holo-[ACP] + adenosine 3',5'-bisphosphate + H(+). Transfers the 4'-phosphopantetheine moiety from coenzyme A to a Ser of acyl-carrier-protein. This is Holo-[acyl-carrier-protein] synthase from Burkholderia cenocepacia (strain HI2424).